Reading from the N-terminus, the 326-residue chain is MNTTPGTVGSDPVILATAGYDHTVRFWQAHSGICTRTVQHQDSQVNALEITPDRSMIAATGYQHIRMYDLNSNNPNPIISYDGVSKNIASVGFHEDGRWMYTGGEDCTARIWDLRSRNLQCQRIFQVNAPINCVCLHPNQAELIVGDQSGTSHIWDLKTDHNEQLIPEPEFSITSAHIDPDASYMAAVNSAGNCFVWNLTGGIGDEVTQLIPKTKIPAHTRYALQCRFSPDSTLLATCSADQTCKIWRTSNFSLMTELSIKSSNPGESSRGWMWGCAFSGDSQYIVTASSDNLARLWCVETGEIKREYGGHQKAVVCLAFNDSVLG.

Methionine 1 bears the N-acetylmethionine mark. WD repeat units lie at residues 1–37 (MNTTPGTVGSDPVILATAGYDHTVRFWQAHSGICTRT), 40–80 (HQDS…PIIS), 83–122 (GVSKNIASVGFHEDGRWMYTGGEDCTARIWDLRSRNLQCQ), 126–165 (QVNAPINCVCLHPNQAELIVGDQSGTSHIWDLKTDHNEQL), and 168–207 (EPEFSITSAHIDPDASYMAAVNSAGNCFVWNLTGGIGDEV). A Phosphothreonine modification is found at threonine 51. Lysine 86 is covalently cross-linked (Glycyl lysine isopeptide (Lys-Gly) (interchain with G-Cter in SUMO3)). Glycyl lysine isopeptide (Lys-Gly) (interchain with G-Cter in SUMO3) cross-links involve residues lysine 215, lysine 245, and lysine 261. The WD 6 repeat unit spans residues 218-257 (AHTRYALQCRFSPDSTLLATCSADQTCKIWRTSNFSLMTE). Residues 268-309 (SSRGWMWGCAFSGDSQYIVTASSDNLARLWCVETGEIKREYG) form a WD 7 repeat. Lysine 305 participates in a covalent cross-link: Glycyl lysine isopeptide (Lys-Gly) (interchain with G-Cter in SUMO3); alternate. Residues lysine 305 and lysine 313 each participate in a glycyl lysine isopeptide (Lys-Gly) (interchain with G-Cter in ubiquitin); alternate cross-link. Lysine 313 is covalently cross-linked (Glycyl lysine isopeptide (Lys-Gly) (interchain with G-Cter in SUMO1); alternate).

Belongs to the WD repeat LST8 family. As to quaternary structure, part of the mechanistic target of rapamycin complex 1 (mTORC1) which contains MTOR, MLST8 and RPTOR. mTORC1 associates with AKT1S1/PRAS40, which inhibits its activity. mTORC1 binds to and is inhibited by FKBP12-rapamycin. Within mTORC1, interacts directly with MTOR and RPTOR. Component of the mechanistic target of rapamycin complex 2 (mTORC2), consisting in two heterotretramers composed of MTOR, MLST8, RICTOR and MAPKAP1/SIN1. Contrary to mTORC1, mTORC2 does not bind to and is not sensitive to FKBP12-rapamycin. mTORC1 and mTORC2 associate with DEPTOR, which regulates their activity. Interacts with RHEB. Interacts with MEAK7. Interacts with SIK3. Interacts with SLC38A7; this interaction promotes the recruitment of mTORC1 to the lysosome and its subsequent activation. In terms of processing, phosphorylation at Thr-51 by CDK1 promotes ubiquitination by the SCF(FBXW7) complex, followed by degradation. Ubiquitination by the SCF(FBXW7) and SCF(FBXW11) complexes following phosphorylation at Thr-51 by CDK1, leads to its degradation by the proteasome. Ubiquitination at Lys-305 and Lys-313 by TRAF2 via 'Lys-63'-linked polyubiquitin chains inhibits formation of the mTORC2 complex, while promoting formation of the mTORC1 complex: ubiquitination disrupts the interaction between MLST8 and MAPKAP1/SIN1 to favor mTORC1 assembly. Deubiquitination at Lys-305 and Lys-313 by OTUD7B promotes MLST8 interaction with MAPKAP1/SIN1, facilitating mTORC2 assembly. Post-translationally, sumoylation with SUMO1, SUMO2 and SUMO3 promotes assembly of both mTORC1 and mTORC2 complexes. As to expression, expressed at highest levels in the brain and testis, followed by lung, heart, kidney, skeletal muscle, spleen and liver. Also expressed in epididymal, abdominal and brown fat, small intestine and pancreas.

The protein resides in the lysosome membrane. The protein localises to the cytoplasm. Subunit of both mTORC1 and mTORC2, which regulates cell growth and survival in response to nutrient and hormonal signals. mTORC1 is activated in response to growth factors or amino acids. In response to nutrients, mTORC1 is recruited to the lysosome membrane and promotes protein, lipid and nucleotide synthesis by phosphorylating several substrates, such as ribosomal protein S6 kinase (RPS6KB1 and RPS6KB2) and EIF4EBP1 (4E-BP1). In the same time, it inhibits catabolic pathways by phosphorylating the autophagy initiation components ULK1 and ATG13, as well as transcription factor TFEB, a master regulators of lysosomal biogenesis and autophagy. The mTORC1 complex is inhibited in response to starvation and amino acid depletion. Within mTORC1, MLST8 interacts directly with MTOR and enhances its kinase activity. In nutrient-poor conditions, stabilizes the MTOR-RPTOR interaction and favors RPTOR-mediated inhibition of MTOR activity. As part of the mTORC2 complex, transduces signals from growth factors to pathways involved in proliferation, cytoskeletal organization, lipogenesis and anabolic output. mTORC2 is also activated by growth factors, but seems to be nutrient-insensitive. In response to growth factors, mTORC2 phosphorylates and activates AGC protein kinase family members, including AKT (AKT1, AKT2 and AKT3), PKC (PRKCA, PRKCB and PRKCE) and SGK1. mTORC2 functions upstream of Rho GTPases to regulate the actin cytoskeleton, probably by activating one or more Rho-type guanine nucleotide exchange factors. mTORC2 promotes the serum-induced formation of stress-fibers or F-actin. mTORC2 plays a critical role in AKT1 activation by mediating phosphorylation of different sites depending on the context, such as 'Thr-450', 'Ser-473', 'Ser-477' or 'Thr-479', facilitating the phosphorylation of the activation loop of AKT1 on 'Thr-308' by PDPK1/PDK1 which is a prerequisite for full activation. mTORC2 regulates the phosphorylation of SGK1 at 'Ser-422'. mTORC2 also modulates the phosphorylation of PRKCA on 'Ser-657'. Within mTORC2, MLST8 acts as a bridge between MAPKAP1/SIN1 and MTOR. In Rattus norvegicus (Rat), this protein is Target of rapamycin complex subunit LST8.